A 92-amino-acid polypeptide reads, in one-letter code: Protein S100-B (92 aa).

N-acetylserine is present on S2. EF-hand domains are found at residues D13–I48 and K49–A84. Zn(2+) is bound at residue H16. S19, E22, and D24 together coordinate Ca(2+). H26 lines the Zn(2+) pocket. Ca(2+)-binding residues include D62, D64, D66, E68, and E73. Zn(2+)-binding residues include H86 and H91.

The protein belongs to the S-100 family. In terms of assembly, dimer of either two alpha chains, or two beta chains, or one alpha and one beta chain. The S100B dimer binds two molecules of STK38. Interacts with CACYBP in a calcium-dependent manner. Interacts with ATAD3A; this interaction probably occurs in the cytosol prior to ATAD3A mitochondrial targeting. Interacts with S100A6. The S100B dimer interacts with two molecules of CAPZA1. Interacts with AGER. Interacts with PPP5C (via TPR repeats); the interaction is calcium-dependent and modulates PPP5C activity. Interacts with TPPP; this interaction inhibits TPPP dimerization. Interacts with isoform CLSTN3beta of CLSTN3; interaction promotes secretion.

The protein localises to the cytoplasm. It is found in the nucleus. Its subcellular location is the secreted. In terms of biological role, small zinc- and- and calcium-binding protein that is highly expressed in astrocytes and constitutes one of the most abundant soluble proteins in brain. Weakly binds calcium but binds zinc very tightly-distinct binding sites with different affinities exist for both ions on each monomer. Physiological concentrations of potassium ion antagonize the binding of both divalent cations, especially affecting high-affinity calcium-binding sites. Acts as a neurotrophic factor that promotes astrocytosis and axonal proliferation. Involved in innervation of thermogenic adipose tissue by acting as an adipocyte-derived neurotrophic factor that promotes sympathetic innervation of adipose tissue. Binds to and initiates the activation of STK38 by releasing autoinhibitory intramolecular interactions within the kinase. Interaction with AGER after myocardial infarction may play a role in myocyte apoptosis by activating ERK1/2 and p53/TP53 signaling. Could assist ATAD3A cytoplasmic processing, preventing aggregation and favoring mitochondrial localization. May mediate calcium-dependent regulation on many physiological processes by interacting with other proteins, such as TPR-containing proteins, and modulating their activity. The chain is Protein S100-B from Mus musculus (Mouse).